Reading from the N-terminus, the 391-residue chain is MNDVIRDFFKMESAGGILLVIAAAIAMTIANSPLGESYQAMLHTYVFGMSVSHWINDGLMAVFFLLIGLEVKRELLEGALKSKETAIFPAIAAVGGMLAPALIYVAFNAGDPEAISGWAIPAATDIAFALGIMALLGKRVPISLKVFLLALAIIDDLGVVVIIALFYTGDLSTMALLVGFAMTGVLFMLNAKEVTKLTPYMIVGAILWFAVLKSGVHATLAGVVIGFAIPLKGKKGEHSPLKHMEHALHPYVAFGILPLFAFANAGISLEGVSMSGLTSMLPLGIALGLLVGKPLGIFTFSWAAVKLGIAKLPQGVNFIHIFAVSVLCGIGFTMSIFISSLAFANVSPEFDTYARLGILMGSTTAAIIGYVLLHFSLPKKAVEEVASEKNA.

11 helical membrane passes run 14–34 (AGGI…NSPL), 47–67 (FGMS…FLLI), 87–107 (IFPA…YVAF), 117–137 (GWAI…ALLG), 146–166 (VFLL…IALF), 171–191 (LSTM…MLNA), 205–225 (AILW…GVVI), 252–272 (VAFG…LEGV), 280–300 (MLPL…IFTF), 318–338 (FIHI…SIFI), and 356–376 (LGIL…LHFS).

It belongs to the NhaA Na(+)/H(+) (TC 2.A.33) antiporter family.

It is found in the cell inner membrane. The enzyme catalyses Na(+)(in) + 2 H(+)(out) = Na(+)(out) + 2 H(+)(in). Functionally, na(+)/H(+) antiporter that extrudes sodium in exchange for external protons. The chain is Na(+)/H(+) antiporter NhaA from Vibrio campbellii (strain ATCC BAA-1116).